Here is a 215-residue protein sequence, read N- to C-terminus: Probable phosphoglycerate mutase GpmB (215 aa).

Residues 8–15, 21–22, arginine 58, 82–85, and 151–152 contribute to the substrate site; these read RHGETVWN, QG, ELNM, and GM. Histidine 9 acts as the Tele-phosphohistidine intermediate in catalysis. Glutamate 82 serves as the catalytic Proton donor/acceptor.

The protein belongs to the phosphoglycerate mutase family. GpmB subfamily.

The enzyme catalyses (2R)-2-phosphoglycerate = (2R)-3-phosphoglycerate. Its pathway is carbohydrate degradation; glycolysis; pyruvate from D-glyceraldehyde 3-phosphate: step 3/5. This chain is Probable phosphoglycerate mutase GpmB, found in Yersinia enterocolitica serotype O:8 / biotype 1B (strain NCTC 13174 / 8081).